Reading from the N-terminus, the 342-residue chain is Alpha-tocopherol transfer protein-like (342 aa).

Residues 1–31 are disordered; the sequence is MSEESDSLRTSPSVASLSENELPPPPEPPGY. The segment covering 8–19 has biased composition (polar residues); it reads LRTSPSVASLSE. Residues 117–282 form the CRAL-TRIO domain; that stretch reads KPSALKDVLA…EYGGTAGELD (166 aa).

In terms of biological role, may act as a protein that binds a hydrophobic ligand. This chain is Alpha-tocopherol transfer protein-like (TTPAL), found in Pongo abelii (Sumatran orangutan).